Here is a 252-residue protein sequence, read N- to C-terminus: Protein IRON-RELATED TRANSCRIPTION FACTOR 3 (252 aa).

The segment at 36–49 (PRKVHKSEREKLKR) is basic motif. The bHLH domain occupies 36–86 (PRKVHKSEREKLKRGHLNDLFGELGNMLEADRQSNGKACILTDTTRILRDL). A helix-loop-helix motif region spans residues 50–86 (GHLNDLFGELGNMLEADRQSNGKACILTDTTRILRDL). The stretch at 76–131 (LTDTTRILRDLLSQVKSLRQENSTLQNESNYVTMERNELQDENGALRSEISDLQNE) forms a coiled coil. Residues 135 to 252 (RATGSPGWGH…GLPRMEDEQM (118 aa)) form a disordered region. The span at 162–176 (PSQQPMQPSPMTTST) shows a compositional bias: low complexity. A compositionally biased stretch (acidic residues) spans 208 to 219 (PAEDPEPSEDQE).

This sequence belongs to the bHLH protein family.

It localises to the nucleus. Its function is as follows. Transcription factor that acts as a negative regulator of the iron deficiency response. Suppresses the induction of iron deficiency responsive genes, such as NAS1, NAS2, IRO2, IRT1, YSL15, and NRAMP1. This Oryza sativa subsp. japonica (Rice) protein is Protein IRON-RELATED TRANSCRIPTION FACTOR 3.